We begin with the raw amino-acid sequence, 207 residues long: Protein N-terminal glutamine amidohydrolase (207 aa).

Catalysis depends on residues C30, H83, and D99.

The protein belongs to the NTAQ1 family. In terms of assembly, monomer.

The protein resides in the cytoplasm. It localises to the cytosol. Its subcellular location is the nucleus. It catalyses the reaction N-terminal L-glutaminyl-[protein] + H2O = N-terminal L-glutamyl-[protein] + NH4(+). In terms of biological role, mediates the side-chain deamidation of N-terminal glutamine residues to glutamate, an important step in N-end rule pathway of protein degradation. Conversion of the resulting N-terminal glutamine to glutamate renders the protein susceptible to arginylation, polyubiquitination and degradation as specified by the N-end rule. Does not act on substrates with internal or C-terminal glutamine and does not act on non-glutamine residues in any position. Does not deaminate acetylated N-terminal glutamine. With the exception of proline, all tested second-position residues on substrate peptides do not greatly influence the activity. In contrast, a proline at position 2, virtually abolishes deamidation of N-terminal glutamine. The protein is Protein N-terminal glutamine amidohydrolase (NTAQ1) of Bos taurus (Bovine).